We begin with the raw amino-acid sequence, 31 residues long: Cytochrome b6-f complex subunit 6 (31 aa).

A helical membrane pass occupies residues 3-23; the sequence is TLTSYFGFLLVALTITLVLFI.

This sequence belongs to the PetL family. The 4 large subunits of the cytochrome b6-f complex are cytochrome b6, subunit IV (17 kDa polypeptide, PetD), cytochrome f and the Rieske protein, while the 4 small subunits are PetG, PetL, PetM and PetN. The complex functions as a dimer.

Its subcellular location is the plastid. The protein localises to the chloroplast thylakoid membrane. Component of the cytochrome b6-f complex, which mediates electron transfer between photosystem II (PSII) and photosystem I (PSI), cyclic electron flow around PSI, and state transitions. PetL is important for photoautotrophic growth as well as for electron transfer efficiency and stability of the cytochrome b6-f complex. This Populus alba (White poplar) protein is Cytochrome b6-f complex subunit 6.